Reading from the N-terminus, the 198-residue chain is uncharacterized protein (198 aa).

The tract at residues 72-95 (ESEEQYDSDDDNDKLVLNDDEDDE) is disordered. Residues 75-94 (EQYDSDDDNDKLVLNDDEDD) are compositionally biased toward acidic residues. Positions 106 to 136 (EATNITNINKNIENIKNDMSNLNNMNDSNQK) form a coiled coil.

This is an uncharacterized protein from Plasmodium falciparum (isolate 3D7).